We begin with the raw amino-acid sequence, 248 residues long: Acetoacetyl-CoA reductase (248 aa).

NADP(+) contacts are provided by residues 14-16 (GGI), Arg42, and 90-94 (NAGIT). Residues Asp96 and 149-152 (QFGQ) contribute to the substrate site. Tyr155 acts as the Proton acceptor in catalysis. 185–188 (PGYT) is an NADP(+) binding site. Substrate-binding positions include 186-187 (GY) and Arg197.

Belongs to the short-chain dehydrogenases/reductases (SDR) family.

The protein localises to the cytoplasm. It catalyses the reaction a (3R)-3-hydroxyacyl-CoA + NADP(+) = a 3-oxoacyl-CoA + NADPH + H(+). It functions in the pathway biopolymer metabolism; poly-(R)-3-hydroxybutanoate biosynthesis. This is Acetoacetyl-CoA reductase (phaB) from Acinetobacter sp. (strain RA3849).